Reading from the N-terminus, the 121-residue chain is uncharacterized protein (121 aa).

A helical transmembrane segment spans residues Ile11–Phe31.

The protein resides in the membrane. This is an uncharacterized protein from Schizosaccharomyces pombe (strain 972 / ATCC 24843) (Fission yeast).